The chain runs to 205 residues: H/ACA ribonucleoprotein complex subunit GAR1 (205 aa).

Over residues 1 to 23 (MSFRGGNRGGRGGFRGGFRGGRT) the composition is skewed to gly residues. The disordered stretch occupies residues 1-31 (MSFRGGNRGGRGGFRGGFRGGRTGSARSFQQ). Arg4 bears the Asymmetric dimethylarginine; by HMT1 mark. The tract at residues 4 to 21 (RGGNRGGRGGFRGGFRGG) is RGG-box 1. Arg8 is modified (asymmetric dimethylarginine; by HMT1; alternate). An Omega-N-methylarginine; by HMT1; alternate modification is found at Arg8. Arg11 is modified (asymmetric dimethylarginine; by HMT1). The residue at position 15 (Arg15) is an Asymmetric dimethylarginine; by HMT1; alternate. At Arg15 the chain carries Omega-N-methylarginine; by HMT1; alternate. Arg19 carries the asymmetric dimethylarginine; by HMT1 modification. A Glycyl lysine isopeptide (Lys-Gly) (interchain with G-Cter in ubiquitin) cross-link involves residue Lys77. Positions 124–205 (PKPKVVGPPK…SRGGFRGGRR (82 aa)) are disordered. Positions 143–205 (APGGRGGASM…SRGGFRGGRR (63 aa)) are enriched in gly residues. Residues Arg147, Arg154, and Arg158 each carry the asymmetric dimethylarginine; by HMT1; alternate modification. Residues Arg147, Arg154, and Arg158 each carry the omega-N-methylarginine; by HMT1; alternate modification. Residues 147 to 205 (RGGASMGRGGSRGGFRGGRGGSSFRGGRGGSSFRGGSRGGSFRGGSRGGSRGGFRGGRR) form an RGG-box 2 region. An Asymmetric dimethylarginine; by HMT1 modification is found at Arg162. Residue Arg165 is modified to Asymmetric dimethylarginine; by HMT1; alternate. The residue at position 165 (Arg165) is an Omega-N-methylarginine; by HMT1; alternate. An asymmetric dimethylarginine; by HMT1 mark is found at Arg171 and Arg174. An omega-N-methylarginine; by HMT1 mark is found at Arg180 and Arg184. The residue at position 189 (Arg189) is an Asymmetric dimethylarginine; by HMT1; alternate. An Omega-N-methylarginine; by HMT1; alternate modification is found at Arg189. Residues Arg193, Arg197, and Arg201 each carry the asymmetric dimethylarginine; by HMT1 modification.

The protein belongs to the GAR1 family. Component of the small nucleolar ribonucleoprotein particles containing H/ACA-type snoRNAs (H/ACA snoRNPs). The protein component of the H/ACA snoRNP contains CBF5, GAR1, NHP2 and NOP10. The complex contains a stable core composed of CBF5 and NOP10, to which GAR1 and NHP2 subsequently bind. Interacts with snoRNAs. Post-translationally, methylated by HMT1, forming asymmetric dimethylarginines (DMA) within a domain referred to as an RGG box, made up of repeated Gly-Gly dipeptides interspersed with Arg and aromatic residues.

Its subcellular location is the nucleus. It localises to the nucleolus. Its function is as follows. Non-catalytic component of the H/ACA small nucleolar ribonucleoprotein (H/ACA snoRNP), which catalyzes pseudouridylation of rRNA and is required for ribosome biogenesis. This involves the isomerization of uridine such that the ribose is subsequently attached to C5, instead of the normal N1. Pseudouridine ('psi') residues may serve to stabilize the conformation of rRNAs. The H/ACA snoRNP complex also mediates pseudouridylation of other types of RNAs. The H/ACA snoRNP complex mediates pseudouridylation at position 93 in U2 snRNA. Essential for growth. This chain is H/ACA ribonucleoprotein complex subunit GAR1, found in Saccharomyces cerevisiae (strain ATCC 204508 / S288c) (Baker's yeast).